Consider the following 452-residue polypeptide: Bifunctional protein GlmU (452 aa).

Residues 1–232 (MTARNSLTIV…EDEVRGINTK (232 aa)) are pyrophosphorylase. UDP-N-acetyl-alpha-D-glucosamine contacts are provided by residues 11 to 14 (LAAG), K25, Q78, and 83 to 84 (GT). Residue D108 participates in Mg(2+) binding. UDP-N-acetyl-alpha-D-glucosamine-binding residues include G144, E158, N173, and N230. N230 is a Mg(2+) binding site. The tract at residues 233–253 (AQLAEAETVMQTRLRLAAMAA) is linker. The tract at residues 254–452 (GVTLIAPETV…KSRHRKPKAH (199 aa)) is N-acetyltransferase. The UDP-N-acetyl-alpha-D-glucosamine site is built by R319 and K337. H349 acts as the Proton acceptor in catalysis. Residues Y352 and N363 each contribute to the UDP-N-acetyl-alpha-D-glucosamine site. Acetyl-CoA is bound by residues A366, 372 to 373 (NY), S391, S409, and R426.

The protein in the N-terminal section; belongs to the N-acetylglucosamine-1-phosphate uridyltransferase family. In the C-terminal section; belongs to the transferase hexapeptide repeat family. Homotrimer. Requires Mg(2+) as cofactor.

It is found in the cytoplasm. It carries out the reaction alpha-D-glucosamine 1-phosphate + acetyl-CoA = N-acetyl-alpha-D-glucosamine 1-phosphate + CoA + H(+). It catalyses the reaction N-acetyl-alpha-D-glucosamine 1-phosphate + UTP + H(+) = UDP-N-acetyl-alpha-D-glucosamine + diphosphate. It participates in nucleotide-sugar biosynthesis; UDP-N-acetyl-alpha-D-glucosamine biosynthesis; N-acetyl-alpha-D-glucosamine 1-phosphate from alpha-D-glucosamine 6-phosphate (route II): step 2/2. It functions in the pathway nucleotide-sugar biosynthesis; UDP-N-acetyl-alpha-D-glucosamine biosynthesis; UDP-N-acetyl-alpha-D-glucosamine from N-acetyl-alpha-D-glucosamine 1-phosphate: step 1/1. Its pathway is bacterial outer membrane biogenesis; LPS lipid A biosynthesis. In terms of biological role, catalyzes the last two sequential reactions in the de novo biosynthetic pathway for UDP-N-acetylglucosamine (UDP-GlcNAc). The C-terminal domain catalyzes the transfer of acetyl group from acetyl coenzyme A to glucosamine-1-phosphate (GlcN-1-P) to produce N-acetylglucosamine-1-phosphate (GlcNAc-1-P), which is converted into UDP-GlcNAc by the transfer of uridine 5-monophosphate (from uridine 5-triphosphate), a reaction catalyzed by the N-terminal domain. The chain is Bifunctional protein GlmU from Rhodopseudomonas palustris (strain ATCC BAA-98 / CGA009).